A 1023-amino-acid polypeptide reads, in one-letter code: Protein FAM13A (1023 aa).

The Rho-GAP domain maps to 43 to 231 (VSLQELERQG…KILENYNTLF (189 aa)). Residues 269–290 (LERDMPKPPPKTKIPKSRSEGS) are disordered. Ser-345 is subject to Phosphoserine. 2 disordered regions span residues 381–437 (VNNS…SGFN) and 459–562 (CAGE…EVPQ). Positions 384–405 (SGGQSSEDSESGTLSASSATSA) are enriched in low complexity. 2 stretches are compositionally biased toward basic and acidic residues: residues 412-427 (SKEQ…KGLI) and 509-524 (SDER…HTQH). The span at 536-549 (PSLSDTKQQRNQDA) shows a compositional bias: polar residues. Ser-597 and Ser-617 each carry phosphoserine. 2 disordered regions span residues 628–663 (QYLD…QEDL) and 726–759 (ISEE…KKQE). The stretch at 666-730 (AQLTRRIQSL…ESKLKISEED (65 aa)) forms a coiled coil. Residue Ser-727 is modified to Phosphoserine. Thr-732 bears the Phosphothreonine mark. Over residues 738–748 (RSNTLPKSFGS) the composition is skewed to polar residues. The span at 750-759 (LEKEDEKKQE) shows a compositional bias: basic and acidic residues. Residues 946–978 (ASIPELLEHLQEMREEKKRIRKKLRDFEDNFFR) adopt a coiled-coil conformation.

Belongs to the FAM13 family. As to expression, isoform 1 is widely expressed, with highest expression in skeletal muscle, thymus, brain and lung. Isoform 3 is less abundant than isoform 1 and predominantly expressed in kidney, pancreas, liver, lung and thymus.

The sequence is that of Protein FAM13A (FAM13A) from Homo sapiens (Human).